Consider the following 101-residue polypeptide: Movement protein (101 aa).

The helical transmembrane segment at 30 to 50 (EVAILSFVALICFYLLYLWVL) threads the bilayer. The segment at 75–101 (VDRSNPIPNLPAPPSQGNPGPFVPGTG) is disordered.

Belongs to the mastrevirus movement protein family. Interacts with the capsid protein (CP). Part of a MP-CP-viral DNA complex.

The protein localises to the host membrane. In terms of biological role, involved in the viral transport within, and between cells. This Maize streak virus genotype A (isolate South Africa) (MSV) protein is Movement protein.